The following is a 727-amino-acid chain: Glycerol-3-phosphate dehydrogenase, mitochondrial (727 aa).

Residues 1-42 (MAFQKAVKRTVLVCGGALATVLGLSQCSHYRRKQVNLACLKA) constitute a mitochondrion transit peptide. FAD is bound at residue 71–99 (DILVIGGGATGSGCALDAVTRGLKTALVE). The residue at position 601 (Tyr601) is a Phosphotyrosine. 2 consecutive EF-hand domains span residues 623-658 (SDIE…INVK) and 659-694 (IDEN…IQKG). Asp672, Asn674, Asn676, Gln678, and Glu683 together coordinate Ca(2+).

Belongs to the FAD-dependent glycerol-3-phosphate dehydrogenase family. FAD serves as cofactor.

It localises to the mitochondrion. The catalysed reaction is a quinone + sn-glycerol 3-phosphate = dihydroxyacetone phosphate + a quinol. Its pathway is polyol metabolism; glycerol degradation via glycerol kinase pathway; glycerone phosphate from sn-glycerol 3-phosphate (aerobic route): step 1/1. With respect to regulation, calcium-binding enhance the activity of the enzyme. Calcium-responsive mitochondrial glycerol-3-phosphate dehydrogenase which seems to be a key component of the pancreatic beta-cell glucose-sensing device. The chain is Glycerol-3-phosphate dehydrogenase, mitochondrial (GPD2) from Mesocricetus auratus (Golden hamster).